Consider the following 613-residue polypeptide: Dihydroxy-acid dehydratase (613 aa).

Asp81 contacts Mg(2+). Cys122 contacts [2Fe-2S] cluster. Mg(2+) is bound by residues Asp123 and Lys124. An N6-carboxylysine modification is found at Lys124. [2Fe-2S] cluster is bound at residue Cys195. Glu491 lines the Mg(2+) pocket. Catalysis depends on Ser517, which acts as the Proton acceptor.

Belongs to the IlvD/Edd family. In terms of assembly, homodimer. Requires [2Fe-2S] cluster as cofactor. Mg(2+) serves as cofactor.

The enzyme catalyses (2R)-2,3-dihydroxy-3-methylbutanoate = 3-methyl-2-oxobutanoate + H2O. It catalyses the reaction (2R,3R)-2,3-dihydroxy-3-methylpentanoate = (S)-3-methyl-2-oxopentanoate + H2O. It participates in amino-acid biosynthesis; L-isoleucine biosynthesis; L-isoleucine from 2-oxobutanoate: step 3/4. Its pathway is amino-acid biosynthesis; L-valine biosynthesis; L-valine from pyruvate: step 3/4. Functions in the biosynthesis of branched-chain amino acids. Catalyzes the dehydration of (2R,3R)-2,3-dihydroxy-3-methylpentanoate (2,3-dihydroxy-3-methylvalerate) into 2-oxo-3-methylpentanoate (2-oxo-3-methylvalerate) and of (2R)-2,3-dihydroxy-3-methylbutanoate (2,3-dihydroxyisovalerate) into 2-oxo-3-methylbutanoate (2-oxoisovalerate), the penultimate precursor to L-isoleucine and L-valine, respectively. In Aeromonas salmonicida (strain A449), this protein is Dihydroxy-acid dehydratase.